Consider the following 52-residue polypeptide: Protein PROPEP890 (52 aa).

A disordered region spans residues Pro-27–Tyr-52. Polar residues predominate over residues Leu-31–Arg-40. Positions Val-42 to Tyr-52 are enriched in basic and acidic residues.

In terms of tissue distribution, expressed in roots. Barely detected in flowers.

In terms of biological role, produces a rapid alkalinization of the cellular media and the induction of defense-related genes, including chitinase 1b, chalcone synthase and CYP93A1. Not active in tobacco or Arabidopsis. The receptor for GmPep890 is probably different from the receptor for GmSubPep. The chain is Protein PROPEP890 (PROPEP890) from Glycine max (Soybean).